Reading from the N-terminus, the 368-residue chain is tRNA/tmRNA (uracil-C(5))-methyltransferase (368 aa).

Residues Q192, Y220, N225, E241, and D301 each contribute to the S-adenosyl-L-methionine site. C326 serves as the catalytic Nucleophile. E360 serves as the catalytic Proton acceptor.

This sequence belongs to the class I-like SAM-binding methyltransferase superfamily. RNA M5U methyltransferase family. TrmA subfamily.

It catalyses the reaction uridine(54) in tRNA + S-adenosyl-L-methionine = 5-methyluridine(54) in tRNA + S-adenosyl-L-homocysteine + H(+). The catalysed reaction is uridine(341) in tmRNA + S-adenosyl-L-methionine = 5-methyluridine(341) in tmRNA + S-adenosyl-L-homocysteine + H(+). Functionally, dual-specificity methyltransferase that catalyzes the formation of 5-methyluridine at position 54 (m5U54) in all tRNAs, and that of position 341 (m5U341) in tmRNA (transfer-mRNA). This chain is tRNA/tmRNA (uracil-C(5))-methyltransferase, found in Actinobacillus pleuropneumoniae serotype 5b (strain L20).